Consider the following 218-residue polypeptide: Dual specificity protein phosphatase TpbA (218 aa).

Positions methionine 1–alanine 28 are cleaved as a signal peptide. Positions aspartate 44–leucine 188 constitute a Tyrosine-protein phosphatase domain. Aspartate 105 serves as the catalytic Proton donor/acceptor. The Phosphocysteine intermediate role is filled by cysteine 132.

Belongs to the protein-tyrosine phosphatase family. In terms of assembly, monomer in solution.

It is found in the periplasm. The enzyme catalyses O-phospho-L-tyrosyl-[protein] + H2O = L-tyrosyl-[protein] + phosphate. It catalyses the reaction O-phospho-L-threonyl-[protein] + H2O = L-threonyl-[protein] + phosphate. It carries out the reaction O-phospho-L-seryl-[protein] + H2O = L-seryl-[protein] + phosphate. The phosphatase activity is completely inhibited by trisodium orthovanadate, a tyrosine phosphatase specific inhibitor. Functionally, phosphatase that regulates diverse phenotypes in P.aeruginosa via regulation of the concentration of cellular c-di-GMP. Acts by dephosphorylating the membrane-anchored diguanylate cyclase TpbB at tyrosine and serine/threonine sites, leading to inactivation of TpbB and reduced c-di-GMP production. The reduced cellular c-di-GMP concentration leads to reduced adhesin expression, reduced extracellular polysaccharide (EPS) production, pellicule production, cell aggregation and biofilm formation, and enhanced swimming and swarming. It affects colony morphology and controls rugose colony formation. TpbA also acts as a positive regulator of extracellular DNA (eDNA, a major component of the biofilm matrix) and cell lysis by reducing c-di-GMP concentrations. In vitro shows phosphatase activity toward p-nitrophenyl phosphate (pNPP), tyrosine phosphopeptides and a threonine phosphopeptide. Does not have phosphodiesterases (PDE) activity, and cannot degrade c-di-GMP. The protein is Dual specificity protein phosphatase TpbA of Pseudomonas aeruginosa (strain UCBPP-PA14).